Reading from the N-terminus, the 1103-residue chain is A disintegrin and metalloproteinase with thrombospondin motifs 10 (1103 aa).

Residues 1–25 (MAPACQILRWALALGLGLMFEVTHA) form the signal peptide. The propeptide occupies 26–233 (FRSQDEFLSS…TERGQPGLKR (208 aa)). Residues Asn-90, Asn-222, and Asn-323 are each glycosylated (N-linked (GlcNAc...) asparagine). The disordered stretch occupies residues 213–233 (KPPPARPLGNETERGQPGLKR). One can recognise a Peptidase M12B domain in the interval 239-457 (RYVETLVVAD…GLGLCLNNRP (219 aa)). Intrachain disulfides connect Cys-315–Cys-376, Cys-351–Cys-358, Cys-370–Cys-452, Cys-409–Cys-436, Cys-479–Cys-501, Cys-490–Cys-508, Cys-496–Cys-531, Cys-521–Cys-536, Cys-559–Cys-596, Cys-563–Cys-601, and Cys-574–Cys-586. Zn(2+) is bound at residue His-392. Glu-393 is an active-site residue. Residues His-396 and His-402 each contribute to the Zn(2+) site. Residues 460–546 (QDFVYPTVAP…VPFGSRPEGV (87 aa)) enclose the Disintegrin domain. One can recognise a TSP type-1 1 domain in the interval 547 to 602 (DGAWGPWTPWGDCSRTCGGGVSSSSRHCDSPRPTIGGKYCLGERRRHRSCNTDDCP). Positions 706–828 (ETIEGVFSPA…IARDSLPPYS (123 aa)) are spacer. 2 N-linked (GlcNAc...) asparagine glycosylation sites follow: Asn-740 and Asn-795. 4 consecutive TSP type-1 domains span residues 825–883 (PPYS…NTEP), 884–945 (CPPD…PTCP), 947–1001 (EWAA…NLRR), and 1003–1058 (PPAR…AKCD). Asn-892 is a glycosylation site (N-linked (GlcNAc...) asparagine). Residues 1065–1103 (GPEECKDVNKVAYCPLVLKFQFCSRAYFRQMCCKTCHGH) form the PLAC domain.

Interacts with FBN1; this interaction promotes microfibrils assembly. Zn(2+) serves as cofactor. In terms of processing, glycosylated. Can be O-fucosylated by POFUT2 on a serine or a threonine residue found within the consensus sequence C1-X(2)-(S/T)-C2-G of the TSP type-1 repeat domains where C1 and C2 are the first and second cysteine residue of the repeat, respectively. Fucosylated repeats can then be further glycosylated by the addition of a beta-1,3-glucose residue by the glucosyltransferase, B3GALTL. Fucosylation mediates the efficient secretion of ADAMTS family members. Can also be C-glycosylated with one or two mannose molecules on tryptophan residues within the consensus sequence W-X-X-W of the TPRs, and N-glycosylated. These other glycosylations can also facilitate secretion. Widely expressed in adult tissues.

The protein resides in the secreted. The protein localises to the extracellular space. Its subcellular location is the extracellular matrix. Functionally, metalloprotease that participate in microfibrils assembly. Microfibrils are extracellular matrix components occurring independently or along with elastin in the formation of elastic tissues. This Homo sapiens (Human) protein is A disintegrin and metalloproteinase with thrombospondin motifs 10 (ADAMTS10).